A 223-amino-acid chain; its full sequence is Thiamine-phosphate synthase (223 aa).

Residues Gln-37–Lys-41 and Asp-72 contribute to the 4-amino-2-methyl-5-(diphosphooxymethyl)pyrimidine site. Residues Asp-73 and Asp-92 each contribute to the Mg(2+) site. 4-amino-2-methyl-5-(diphosphooxymethyl)pyrimidine is bound at residue Ser-110. Thr-136–Ser-138 serves as a coordination point for 2-[(2R,5Z)-2-carboxy-4-methylthiazol-5(2H)-ylidene]ethyl phosphate. Lys-139 serves as a coordination point for 4-amino-2-methyl-5-(diphosphooxymethyl)pyrimidine. Residues Gly-168 and Ile-188–Ser-189 each bind 2-[(2R,5Z)-2-carboxy-4-methylthiazol-5(2H)-ylidene]ethyl phosphate.

The protein belongs to the thiamine-phosphate synthase family. It depends on Mg(2+) as a cofactor.

The catalysed reaction is 2-[(2R,5Z)-2-carboxy-4-methylthiazol-5(2H)-ylidene]ethyl phosphate + 4-amino-2-methyl-5-(diphosphooxymethyl)pyrimidine + 2 H(+) = thiamine phosphate + CO2 + diphosphate. It carries out the reaction 2-(2-carboxy-4-methylthiazol-5-yl)ethyl phosphate + 4-amino-2-methyl-5-(diphosphooxymethyl)pyrimidine + 2 H(+) = thiamine phosphate + CO2 + diphosphate. It catalyses the reaction 4-methyl-5-(2-phosphooxyethyl)-thiazole + 4-amino-2-methyl-5-(diphosphooxymethyl)pyrimidine + H(+) = thiamine phosphate + diphosphate. It participates in cofactor biosynthesis; thiamine diphosphate biosynthesis; thiamine phosphate from 4-amino-2-methyl-5-diphosphomethylpyrimidine and 4-methyl-5-(2-phosphoethyl)-thiazole: step 1/1. In terms of biological role, condenses 4-methyl-5-(beta-hydroxyethyl)thiazole monophosphate (THZ-P) and 2-methyl-4-amino-5-hydroxymethyl pyrimidine pyrophosphate (HMP-PP) to form thiamine monophosphate (TMP). In Streptococcus agalactiae serotype Ia (strain ATCC 27591 / A909 / CDC SS700), this protein is Thiamine-phosphate synthase.